Consider the following 606-residue polypeptide: NADH-ubiquinone oxidoreductase chain 5 (606 aa).

A run of 15 helical transmembrane segments spans residues 1–21 (MNMF…PIIM), 43–63 (AFMI…ETIF), 87–107 (MIFV…SMWY), 117–137 (FFKY…ANNM), 140–160 (LFIG…WWYG), 171–191 (AVLY…WFLL), 201–221 (IFIT…LAAT), 241–261 (TPVS…FLLI), 273–293 (IQTL…ICAL), 310–330 (LGLM…LHIC), 365–385 (VLPF…GMPF), 409–429 (LLIT…IMFF), 457–477 (LLIG…PTTI), 488–508 (MTAL…NLTT), and 582–602 (GLIK…LLIL).

It belongs to the complex I subunit 5 family. In terms of assembly, core subunit of respiratory chain NADH dehydrogenase (Complex I) which is composed of 45 different subunits.

It is found in the mitochondrion inner membrane. The catalysed reaction is a ubiquinone + NADH + 5 H(+)(in) = a ubiquinol + NAD(+) + 4 H(+)(out). Core subunit of the mitochondrial membrane respiratory chain NADH dehydrogenase (Complex I) which catalyzes electron transfer from NADH through the respiratory chain, using ubiquinone as an electron acceptor. Essential for the catalytic activity and assembly of complex I. The polypeptide is NADH-ubiquinone oxidoreductase chain 5 (MT-ND5) (Canis lupus familiaris (Dog)).